Reading from the N-terminus, the 98-residue chain is Defensin-like protein 219 (98 aa).

The signal sequence occupies residues 1–16 (MKTIFVFLTLAVLVSS). 3 cysteine pairs are disulfide-bonded: C68/C85, C71/C90, and C75/C92.

This sequence belongs to the DEFL family.

The protein localises to the secreted. This Arabidopsis thaliana (Mouse-ear cress) protein is Defensin-like protein 219.